Consider the following 408-residue polypeptide: DNA replication and repair protein RecF (408 aa).

30–37 lines the ATP pocket; that stretch reads GSNGQGKT. Disordered stretches follow at residues 220–252 and 389–408; these read DHGP…DGGR and SPTP…GGAA. The segment covering 389 to 402 has biased composition (low complexity); that stretch reads SPTPASASEPASPG.

It belongs to the RecF family.

It localises to the cytoplasm. Functionally, the RecF protein is involved in DNA metabolism; it is required for DNA replication and normal SOS inducibility. RecF binds preferentially to single-stranded, linear DNA. It also seems to bind ATP. The sequence is that of DNA replication and repair protein RecF from Clavibacter sepedonicus (Clavibacter michiganensis subsp. sepedonicus).